A 94-amino-acid chain; its full sequence is Co-chaperonin GroES (94 aa).

This sequence belongs to the GroES chaperonin family. As to quaternary structure, heptamer of 7 subunits arranged in a ring. Interacts with the chaperonin GroEL.

It localises to the cytoplasm. Functionally, together with the chaperonin GroEL, plays an essential role in assisting protein folding. The GroEL-GroES system forms a nano-cage that allows encapsulation of the non-native substrate proteins and provides a physical environment optimized to promote and accelerate protein folding. GroES binds to the apical surface of the GroEL ring, thereby capping the opening of the GroEL channel. The protein is Co-chaperonin GroES of Anoxybacillus flavithermus (strain DSM 21510 / WK1).